The following is a 671-amino-acid chain: DNA ligase (671 aa).

NAD(+)-binding positions include 32–36 (DAEYD), 81–82 (SL), and Glu-113. Lys-115 acts as the N6-AMP-lysine intermediate in catalysis. NAD(+)-binding residues include Arg-136, Glu-173, Lys-290, and Lys-314. 4 residues coordinate Zn(2+): Cys-408, Cys-411, Cys-426, and Cys-432. In terms of domain architecture, BRCT spans 593–671 (EIDSPFAGKT…ETEMLRLLGS (79 aa)).

This sequence belongs to the NAD-dependent DNA ligase family. LigA subfamily. Mg(2+) is required as a cofactor. The cofactor is Mn(2+).

It catalyses the reaction NAD(+) + (deoxyribonucleotide)n-3'-hydroxyl + 5'-phospho-(deoxyribonucleotide)m = (deoxyribonucleotide)n+m + AMP + beta-nicotinamide D-nucleotide.. Functionally, DNA ligase that catalyzes the formation of phosphodiester linkages between 5'-phosphoryl and 3'-hydroxyl groups in double-stranded DNA using NAD as a coenzyme and as the energy source for the reaction. It is essential for DNA replication and repair of damaged DNA. This is DNA ligase from Escherichia coli O81 (strain ED1a).